A 180-amino-acid chain; its full sequence is Large ribosomal subunit protein uL6 (180 aa).

The protein belongs to the universal ribosomal protein uL6 family. In terms of assembly, part of the 50S ribosomal subunit.

In terms of biological role, this protein binds to the 23S rRNA, and is important in its secondary structure. It is located near the subunit interface in the base of the L7/L12 stalk, and near the tRNA binding site of the peptidyltransferase center. The chain is Large ribosomal subunit protein uL6 from Borrelia hermsii (strain HS1 / DAH).